A 131-amino-acid polypeptide reads, in one-letter code: Ribosome-binding factor A (131 aa).

Belongs to the RbfA family. As to quaternary structure, monomer. Binds 30S ribosomal subunits, but not 50S ribosomal subunits or 70S ribosomes.

It localises to the cytoplasm. One of several proteins that assist in the late maturation steps of the functional core of the 30S ribosomal subunit. Associates with free 30S ribosomal subunits (but not with 30S subunits that are part of 70S ribosomes or polysomes). Required for efficient processing of 16S rRNA. May interact with the 5'-terminal helix region of 16S rRNA. The polypeptide is Ribosome-binding factor A (Vibrio vulnificus (strain CMCP6)).